The following is a 343-amino-acid chain: N-acetyl-gamma-glutamyl-phosphate reductase (343 aa).

Residue C147 is part of the active site.

It belongs to the NAGSA dehydrogenase family. Type 1 subfamily.

It localises to the cytoplasm. The enzyme catalyses N-acetyl-L-glutamate 5-semialdehyde + phosphate + NADP(+) = N-acetyl-L-glutamyl 5-phosphate + NADPH + H(+). It participates in amino-acid biosynthesis; L-arginine biosynthesis; N(2)-acetyl-L-ornithine from L-glutamate: step 3/4. Functionally, catalyzes the NADPH-dependent reduction of N-acetyl-5-glutamyl phosphate to yield N-acetyl-L-glutamate 5-semialdehyde. This is N-acetyl-gamma-glutamyl-phosphate reductase from Listeria monocytogenes serovar 1/2a (strain ATCC BAA-679 / EGD-e).